We begin with the raw amino-acid sequence, 454 residues long: ESX-1 secretion-associated protein EspB (454 aa).

3 disordered regions span residues arginine 17–threonine 40, glycine 82–serine 128, and alanine 391–lysine 454. Gly residues predominate over residues alanine 391–lysine 422.

This sequence belongs to the EspB family. Post-translationally, cleaved at close to the C-terminus during secretion.

It localises to the secreted. In Mycobacterium marinum (strain ATCC BAA-535 / M), this protein is ESX-1 secretion-associated protein EspB.